The chain runs to 110 residues: Insulin-2 (110 aa).

The N-terminal stretch at 1 to 24 is a signal peptide; it reads MALWMRFLPLLALLFLWESHPTQA. Intrachain disulfides connect Cys31–Cys96, Cys43–Cys109, and Cys95–Cys100. The propeptide at 57 to 87 is c peptide; sequence EVEDPQVAQLELGGGPGAGDLQTLALEVAQQ.

The protein belongs to the insulin family. Heterodimer of a B chain and an A chain linked by two disulfide bonds.

It localises to the secreted. In terms of biological role, insulin decreases blood glucose concentration. It increases cell permeability to monosaccharides, amino acids and fatty acids. It accelerates glycolysis, the pentose phosphate cycle, and glycogen synthesis in liver. The chain is Insulin-2 (Ins2) from Mus musculus (Mouse).